The sequence spans 647 residues: DNA mismatch repair protein MutL (647 aa).

The segment at 375–433 is disordered; that stretch reads KQEEPQAVKQPTQLWQPPKQEWQPPQSLVREEQSWQPSTKPIIEEPIQEEKSWDSNEEG. The span at 387–400 shows a compositional bias: low complexity; that stretch reads QLWQPPKQEWQPPQ.

This sequence belongs to the DNA mismatch repair MutL/HexB family.

This protein is involved in the repair of mismatches in DNA. It is required for dam-dependent methyl-directed DNA mismatch repair. May act as a 'molecular matchmaker', a protein that promotes the formation of a stable complex between two or more DNA-binding proteins in an ATP-dependent manner without itself being part of a final effector complex. The chain is DNA mismatch repair protein MutL from Bacillus cereus (strain AH820).